The primary structure comprises 676 residues: Lutropin-choriogonadotropic hormone receptor (676 aa).

A signal peptide spans 1–29 (MKQPLLALQLLKLLLLLLLPLPPLPRALR). The Extracellular portion of the chain corresponds to 30–340 (EARCCPEPCN…EDIMGYDFLR (311 aa)). N-linked (GlcNAc...) asparagine glycosylation is present at Asn103. LRR repeat units follow at residues 126-151 (LPRL…IFSS), 153-175 (TNFI…AFQG), 176-200 (MNNE…AFNG), 201-224 (TTVI…AFRG), and 225-248 (ATGP…GLES). N-linked (GlcNAc...) asparagine glycans are attached at residues Asn178 and Asn199. Tyr308 carries the post-translational modification Sulfotyrosine. A helical transmembrane segment spans residues 341-362 (VLIWLINILAIMGNMTVLFVLL). Over 363 to 372 (TSRYKLTVPR) the chain is Cytoplasmic. A helical membrane pass occupies residues 373 to 393 (FLMCNLSFADFCMGLYLLLIA). Residues 394–416 (SVDSQTKGQYYNHAIDWQTGSGC) are Extracellular-facing. Cys416 and Cys491 form a disulfide bridge. Residues 417–439 (NTAGFFTVFASELSVYTLTVITL) traverse the membrane as a helical segment. Over 440–459 (ERWHTITYAIHLDQKLRLRH) the chain is Cytoplasmic. The chain crosses the membrane as a helical span at residues 460–482 (AILIMLGGWLFSSLIAMLPLVGV). At 483-502 (SNYMKVSICFPMDVETTLSQ) the chain is on the extracellular side. Residues 503 to 526 (IYILTILILNVVAFIIICACYIKI) form a helical membrane-spanning segment. Over 527 to 547 (YFAVRNPELMATNKDTKIAKK) the chain is Cytoplasmic. A helical transmembrane segment spans residues 548–571 (MAILIFTDFTCMAPISFFAISAAF). Over 572–582 (KMPLITVTNSK) the chain is Extracellular. The chain crosses the membrane as a helical span at residues 583–604 (VLLVLFYPINSCANPFLYAIFT). Over 605–676 (KTFRRDFFLL…LLDKTCYKEY (72 aa)) the chain is Cytoplasmic. S-palmitoyl cysteine attachment occurs at residues Cys620 and Cys621.

The protein belongs to the G-protein coupled receptor 1 family. FSH/LSH/TSH subfamily. Post-translationally, sulfated.

It is found in the cell membrane. Its function is as follows. Receptor for lutropin-choriogonadotropic hormone. The activity of this receptor is mediated by G proteins which activate adenylate cyclase. This chain is Lutropin-choriogonadotropic hormone receptor (LHCGR), found in Callithrix jacchus (White-tufted-ear marmoset).